A 69-amino-acid chain; its full sequence is Putative membrane protein insertion efficiency factor (69 aa).

It belongs to the UPF0161 family.

The protein localises to the cell inner membrane. Its function is as follows. Could be involved in insertion of integral membrane proteins into the membrane. This is Putative membrane protein insertion efficiency factor from Dechloromonas aromatica (strain RCB).